Reading from the N-terminus, the 901-residue chain is Aconitate hydratase A (901 aa).

Cys443, Cys509, and Cys512 together coordinate [4Fe-4S] cluster.

The protein belongs to the aconitase/IPM isomerase family. As to quaternary structure, monomer. Requires [4Fe-4S] cluster as cofactor.

It catalyses the reaction citrate = D-threo-isocitrate. It carries out the reaction (2S,3R)-3-hydroxybutane-1,2,3-tricarboxylate = 2-methyl-cis-aconitate + H2O. It functions in the pathway carbohydrate metabolism; tricarboxylic acid cycle; isocitrate from oxaloacetate: step 2/2. The protein operates within organic acid metabolism; propanoate degradation. In terms of biological role, involved in the catabolism of short chain fatty acids (SCFA) via the tricarboxylic acid (TCA)(acetyl degradation route) and probably the 2-methylcitrate cycle I (propionate degradation route). Catalyzes the reversible isomerization of citrate to isocitrate via cis-aconitate. Could catalyze the hydration of 2-methyl-cis-aconitate to yield (2R,3S)-2-methylisocitrate. The apo form of AcnA functions as a RNA-binding regulatory protein. The sequence is that of Aconitate hydratase A (acnA) from Staphylococcus aureus (strain MRSA252).